We begin with the raw amino-acid sequence, 410 residues long: Metacaspase-1B (410 aa).

The tract at residues 1–106 (MYHRNSAPPP…SFGKGAPSNY (106 aa)) is disordered. 2 stretches are compositionally biased toward pro residues: residues 7 to 23 (APPP…PQSQ) and 32 to 52 (PPYP…PPPT). Residues histidine 201 and cysteine 257 contribute to the active site.

It belongs to the peptidase C14B family.

Involved in cell death (apoptosis). The polypeptide is Metacaspase-1B (casB) (Aspergillus clavatus (strain ATCC 1007 / CBS 513.65 / DSM 816 / NCTC 3887 / NRRL 1 / QM 1276 / 107)).